The sequence spans 189 residues: Elongation factor P (189 aa).

N6-(3,6-diaminohexanoyl)-5-hydroxylysine is present on Lys34.

This sequence belongs to the elongation factor P family. May be beta-lysylated on the epsilon-amino group of Lys-34 by the combined action of EpmA and EpmB, and then hydroxylated on the C5 position of the same residue by EpmC (if this protein is present). Lysylation is critical for the stimulatory effect of EF-P on peptide-bond formation. The lysylation moiety may extend toward the peptidyltransferase center and stabilize the terminal 3-CCA end of the tRNA. Hydroxylation of the C5 position on Lys-34 may allow additional potential stabilizing hydrogen-bond interactions with the P-tRNA.

It localises to the cytoplasm. It participates in protein biosynthesis; polypeptide chain elongation. Its function is as follows. Involved in peptide bond synthesis. Alleviates ribosome stalling that occurs when 3 or more consecutive Pro residues or the sequence PPG is present in a protein, possibly by augmenting the peptidyl transferase activity of the ribosome. Modification of Lys-34 is required for alleviation. In Halorhodospira halophila (strain DSM 244 / SL1) (Ectothiorhodospira halophila (strain DSM 244 / SL1)), this protein is Elongation factor P.